The primary structure comprises 440 residues: Beta-1,3-galactosyl-O-glycosyl-glycoprotein beta-1,6-N-acetylglucosaminyltransferase (440 aa).

Residues 1–12 (MKMAGWKKKLCR) are Cytoplasmic-facing. The helical; Signal-anchor for type II membrane protein transmembrane segment at 13 to 30 (GHHLWALGCYMLLAVVSL) threads the bilayer. The Lumenal portion of the chain corresponds to 31–440 (RLSLRFKCDV…RHKAIYGTEL (410 aa)). 2 N-linked (GlcNAc...) asparagine; by host glycosylation sites follow: Asn72 and Asn108. Cystine bridges form between Cys73–Cys230, Cys164–Cys384, Cys185–Cys212, and Cys393–Cys425.

The protein belongs to the glycosyltransferase 14 family.

It localises to the host Golgi apparatus membrane. It carries out the reaction a 3-O-[beta-D-galactosyl-(1-&gt;3)-N-acetyl-alpha-D-galactosaminyl]-L-seryl-[protein] + UDP-N-acetyl-alpha-D-glucosamine = 3-O-{beta-D-galactosyl-(1-&gt;3)-[N-acetyl-beta-D-glucosaminyl-(1-&gt;6)]-N-acetyl-alpha-D-galactosaminyl}-L-seryl-[protein] + UDP + H(+). The enzyme catalyses a 3-O-[beta-D-galactosyl-(1-&gt;3)-N-acetyl-alpha-D-galactosaminyl]-L-threonyl-[protein] + UDP-N-acetyl-alpha-D-glucosamine = a 3-O-{beta-D-galactosyl-(1-&gt;3)-[N-acetyl-beta-D-glucosaminyl-(1-&gt;6)]-N-acetyl-alpha-D-galactosaminyl}-L-threonyl-[protein] + UDP + H(+). The catalysed reaction is a beta-D-Gal-(1-&gt;4)-beta-D-GlcNAc-(1-&gt;3)-beta-D-Gal-(1-&gt;4)-beta-D-GlcNAc derivative + UDP-N-acetyl-alpha-D-glucosamine = a beta-D-Gal-(1-&gt;4)-beta-D-GlcNAc-(1-&gt;3)-[beta-D-GlcNAc-(1-&gt;6)]-beta-D-Gal-(1-&gt;4)-N-acetyl-beta-D-glucosaminyl derivative + UDP + H(+). It catalyses the reaction 3-O-[N-acetyl-beta-D-glucosaminyl-(1-&gt;3)-N-acetyl-alpha-D-galactosaminyl]-L-seryl-[protein] + UDP-N-acetyl-alpha-D-glucosamine = 3-O-[N-acetyl-beta-D-glucosaminyl-(1-&gt;3)-[N-acetyl-beta-D-glucosaminyl-(1-&gt;6)]-N-acetyl-alpha-D-galactosaminyl]-L-seryl-[protein] + UDP + H(+). It carries out the reaction a 3-O-[N-acetyl-beta-D-glucosaminyl-(1-&gt;3)-N-acetyl-alpha-D-galactosaminyl]-L-threonyl-[protein] + UDP-N-acetyl-alpha-D-glucosamine = 3-O-[N-acetyl-beta-D-glucosaminyl-(1-&gt;3)-[N-acetyl-beta-D-glucosaminyl-(1-&gt;6)]-N-acetyl-alpha-D-galactosaminyl]-L-threonyl-[protein] + UDP + H(+). It participates in protein modification; protein glycosylation. Non-essential glycosyltransferase that can synthesize all known mucin beta 6 N-acetylglucosaminides. Mediates core 2 and core 4 O-glycan branching, 2 important steps in mucin-type biosynthesis. Has also I-branching enzyme activity by converting linear into branched poly-N-acetyllactosaminoglycans. Contributes to the post-translational modifications of structural proteins. This Bos taurus (Bovine) protein is Beta-1,3-galactosyl-O-glycosyl-glycoprotein beta-1,6-N-acetylglucosaminyltransferase (Bo17).